We begin with the raw amino-acid sequence, 417 residues long: UDP-N-acetylglucosamine 1-carboxyvinyltransferase (417 aa).

22–23 (KN) is a phosphoenolpyruvate binding site. R93 provides a ligand contact to UDP-N-acetyl-alpha-D-glucosamine. The Proton donor role is filled by C117. Residue C117 is modified to 2-(S-cysteinyl)pyruvic acid O-phosphothioketal. UDP-N-acetyl-alpha-D-glucosamine contacts are provided by residues 122 to 126 (RPVDQ), D305, and I327.

This sequence belongs to the EPSP synthase family. MurA subfamily.

The protein resides in the cytoplasm. It catalyses the reaction phosphoenolpyruvate + UDP-N-acetyl-alpha-D-glucosamine = UDP-N-acetyl-3-O-(1-carboxyvinyl)-alpha-D-glucosamine + phosphate. It functions in the pathway cell wall biogenesis; peptidoglycan biosynthesis. Its function is as follows. Cell wall formation. Adds enolpyruvyl to UDP-N-acetylglucosamine. This is UDP-N-acetylglucosamine 1-carboxyvinyltransferase from Nitrosomonas eutropha (strain DSM 101675 / C91 / Nm57).